Reading from the N-terminus, the 435-residue chain is Transforming growth factor beta-2 proprotein (435 aa).

Residues 1–20 (MHYCVLSAFLLLHLVTVALS) form the signal peptide. Asparagine 72, asparagine 140, and asparagine 241 each carry an N-linked (GlcNAc...) asparagine glycan. Disulfide bonds link cysteine 309–cysteine 318, cysteine 317–cysteine 380, cysteine 346–cysteine 411, and cysteine 350–cysteine 413.

Belongs to the TGF-beta family. In terms of assembly, interacts with the serine proteases, HTRA1 and HTRA3. Interacts with ASPN. Interacts with MFAP5. Interacts with Transforming growth factor beta-2 (TGF-beta-2) chain; interaction is non-covalent and maintains (TGF-beta-2) in a latent state. Interacts with LRRC32/GARP; leading to regulate activation of TGF-beta-2. Interacts with NREP; the interaction results in a decrease in TGFB2 autoinduction. As to quaternary structure, transforming growth factor beta-2: Homodimer; disulfide-linked. Transforming growth factor beta-2: Interacts with TGF-beta receptors (TGFBR1 and TGFBR2), leading to signal transduction. Post-translationally, the precursor proprotein is cleaved in the Golgi apparatus to form Transforming growth factor beta-2 (TGF-beta-2) and Latency-associated peptide (LAP) chains, which remain non-covalently linked, rendering TGF-beta-2 inactive.

It is found in the secreted. The protein resides in the extracellular space. It localises to the extracellular matrix. In terms of biological role, precursor of the Latency-associated peptide (LAP) and Transforming growth factor beta-2 (TGF-beta-2) chains, which constitute the regulatory and active subunit of TGF-beta-2, respectively. Its function is as follows. Required to maintain the Transforming growth factor beta-2 (TGF-beta-2) chain in a latent state during storage in extracellular matrix. Associates non-covalently with TGF-beta-2 and regulates its activation via interaction with 'milieu molecules', such as LTBP1 and LRRC32/GARP, that control activation of TGF-beta-2. Multifunctional protein that regulates various processes such as angiogenesis and heart development. Activation into mature form follows different steps: following cleavage of the proprotein in the Golgi apparatus, Latency-associated peptide (LAP) and Transforming growth factor beta-2 (TGF-beta-2) chains remain non-covalently linked rendering TGF-beta-2 inactive during storage in extracellular matrix. At the same time, LAP chain interacts with 'milieu molecules', such as LTBP1 and LRRC32/GARP, that control activation of TGF-beta-2 and maintain it in a latent state during storage in extracellular milieus. Once activated following release of LAP, TGF-beta-2 acts by binding to TGF-beta receptors (TGFBR1 and TGFBR2), which transduce signal. This is Transforming growth factor beta-2 proprotein (TGFB2) from Sus scrofa (Pig).